We begin with the raw amino-acid sequence, 284 residues long: MNKFSFTKMHGLGNSYIYVNMFEETIPESLLSSLAVKVSNVNTGIGADGMILICPSEVAPVKMRIFNSDGSEGKNCGNGLRCVAKYAYEHGMVKDRSFFIETLSGLVKAEVTVENGAVTNVTIDMGKPRLKRSEIPMIGLDAERVVAEPFEVDGKQYEITAVSMGNPHVIFYVDDITTAPVTTLGPIVEKDERFPEGVNVEFVEVVNDHELHFRVWERGSGVTQACGTGACAAVVASVLNGKTARNKETVVHLAGGDLIITWTDEGNVRMTGPAETICTGVYYY.

Positions 14 and 67 each coordinate substrate. The active-site Proton donor is the C76. Substrate contacts are provided by residues 77-78 (GN), N166, N199, and 217-218 (ER). The active-site Proton acceptor is the C226. 227-228 (GT) provides a ligand contact to substrate.

The protein belongs to the diaminopimelate epimerase family. In terms of assembly, homodimer.

Its subcellular location is the cytoplasm. It catalyses the reaction (2S,6S)-2,6-diaminopimelate = meso-2,6-diaminopimelate. It functions in the pathway amino-acid biosynthesis; L-lysine biosynthesis via DAP pathway; DL-2,6-diaminopimelate from LL-2,6-diaminopimelate: step 1/1. Functionally, catalyzes the stereoinversion of LL-2,6-diaminopimelate (L,L-DAP) to meso-diaminopimelate (meso-DAP), a precursor of L-lysine and an essential component of the bacterial peptidoglycan. This Geobacillus sp. (strain WCH70) protein is Diaminopimelate epimerase.